The chain runs to 406 residues: Argininosuccinate synthase (406 aa).

8–16 provides a ligand contact to ATP; that stretch reads AYSGGLDTS. Residue Tyr86 participates in L-citrulline binding. Gly116 is an ATP binding site. L-aspartate-binding residues include Thr118, Asn122, and Asp123. Asn122 is a binding site for L-citrulline. L-citrulline contacts are provided by Arg126, Ser174, Ser183, Glu259, and Tyr271.

The protein belongs to the argininosuccinate synthase family. Type 1 subfamily. Homotetramer.

The protein resides in the cytoplasm. It catalyses the reaction L-citrulline + L-aspartate + ATP = 2-(N(omega)-L-arginino)succinate + AMP + diphosphate + H(+). Its pathway is amino-acid biosynthesis; L-arginine biosynthesis; L-arginine from L-ornithine and carbamoyl phosphate: step 2/3. The polypeptide is Argininosuccinate synthase (Dehalococcoides mccartyi (strain ATCC BAA-2100 / JCM 16839 / KCTC 5957 / BAV1)).